The sequence spans 66 residues: Phylloseptin-H5 (66 aa).

The signal sequence occupies residues M1–C22. Residues E23–E44 constitute a propeptide that is removed on maturation. A disordered region spans residues E24–E44. Acidic residues predominate over residues E30 to K41. Position 65 is a phenylalanine amide (F65).

As to expression, expressed by the skin glands.

The protein resides in the secreted. In terms of biological role, has antibacterial activity against the Gram-negative bacteria E.coli and P.aeruginosa, and the Gram-positive bacterium S.aureus. No hemolytic activity. This Pithecopus hypochondrialis (Orange-legged leaf frog) protein is Phylloseptin-H5 (psn7).